The primary structure comprises 467 residues: Ribulose bisphosphate carboxylase large chain (467 aa).

Lys-5 carries the post-translational modification N6,N6,N6-trimethyllysine. The substrate site is built by Asn-114 and Thr-164. Residue Lys-166 is the Proton acceptor of the active site. Residue Lys-168 coordinates substrate. Mg(2+)-binding residues include Lys-192, Asp-194, and Glu-195. An N6-carboxylysine modification is found at Lys-192. His-285 serves as the catalytic Proton acceptor. Substrate contacts are provided by Arg-286, His-318, and Ser-370.

This sequence belongs to the RuBisCO large chain family. Type I subfamily. Heterohexadecamer of 8 large chains and 8 small chains; disulfide-linked. The disulfide link is formed within the large subunit homodimers. Requires Mg(2+) as cofactor. The disulfide bond which can form in the large chain dimeric partners within the hexadecamer appears to be associated with oxidative stress and protein turnover.

Its subcellular location is the plastid. It is found in the chloroplast. It catalyses the reaction 2 (2R)-3-phosphoglycerate + 2 H(+) = D-ribulose 1,5-bisphosphate + CO2 + H2O. It carries out the reaction D-ribulose 1,5-bisphosphate + O2 = 2-phosphoglycolate + (2R)-3-phosphoglycerate + 2 H(+). Functionally, ruBisCO catalyzes two reactions: the carboxylation of D-ribulose 1,5-bisphosphate, the primary event in carbon dioxide fixation, as well as the oxidative fragmentation of the pentose substrate in the photorespiration process. Both reactions occur simultaneously and in competition at the same active site. In Hydrophyllum virginianum (Eastern waterleaf), this protein is Ribulose bisphosphate carboxylase large chain.